We begin with the raw amino-acid sequence, 37 residues long: Large ribosomal subunit protein bL36 (37 aa).

It belongs to the bacterial ribosomal protein bL36 family.

The chain is Large ribosomal subunit protein bL36 from Azoarcus sp. (strain BH72).